The sequence spans 272 residues: Phosphoglycolate phosphatase (272 aa).

Asp19 serves as the catalytic Nucleophile. Asp19, Asp21, and Asp182 together coordinate Mg(2+).

Belongs to the HAD-like hydrolase superfamily. CbbY/CbbZ/Gph/YieH family. Requires Mg(2+) as cofactor.

It carries out the reaction 2-phosphoglycolate + H2O = glycolate + phosphate. It participates in organic acid metabolism; glycolate biosynthesis; glycolate from 2-phosphoglycolate: step 1/1. In terms of biological role, specifically catalyzes the dephosphorylation of 2-phosphoglycolate. Is involved in the dissimilation of the intracellular 2-phosphoglycolate formed during the DNA repair of 3'-phosphoglycolate ends, a major class of DNA lesions induced by oxidative stress. The protein is Phosphoglycolate phosphatase of Pseudomonas savastanoi pv. phaseolicola (strain 1448A / Race 6) (Pseudomonas syringae pv. phaseolicola (strain 1448A / Race 6)).